The following is a 393-amino-acid chain: Pyrin and HIN domain-containing protein 1-like (393 aa).

The Pyrin domain occupies 1–87; it reads MVNEYKRIVL…ANKLKNEKAK (87 aa). Residues 82-188 form a disordered region; sequence KNEKAKAKRK…TPTRSSSRIL (107 aa). The span at 87–102 shows a compositional bias: basic residues; sequence KAKRKGKGKRKTAAKR. Polar residues-rich tracts occupy residues 108–118 and 126–151; these read PSTSQPMSTTN and GRSTPDTQVAQLSLPTASRRNQAIQI. Low complexity predominate over residues 152–169; sequence SPTIASSSGQTSSRSSET. The segment covering 170–186 has biased composition (polar residues); the sequence is LQSIIQSPETPTRSSSR. In terms of domain architecture, HIN-200 spans 219–393; sequence NVPKEPSEEN…NPGDKLRLML (175 aa).

Belongs to the HIN-200 family.

It localises to the nucleus. The protein is Pyrin and HIN domain-containing protein 1-like of Mus musculus (Mouse).